The primary structure comprises 315 residues: Lipoyl synthase (315 aa).

[4Fe-4S] cluster-binding residues include Cys63, Cys68, Cys74, Cys89, Cys93, Cys96, and Ser303. The Radical SAM core domain maps to 75-292 (FSKGTATFMI…EEKAYEMGFV (218 aa)).

This sequence belongs to the radical SAM superfamily. Lipoyl synthase family. [4Fe-4S] cluster is required as a cofactor.

It localises to the cytoplasm. It catalyses the reaction [[Fe-S] cluster scaffold protein carrying a second [4Fe-4S](2+) cluster] + N(6)-octanoyl-L-lysyl-[protein] + 2 oxidized [2Fe-2S]-[ferredoxin] + 2 S-adenosyl-L-methionine + 4 H(+) = [[Fe-S] cluster scaffold protein] + N(6)-[(R)-dihydrolipoyl]-L-lysyl-[protein] + 4 Fe(3+) + 2 hydrogen sulfide + 2 5'-deoxyadenosine + 2 L-methionine + 2 reduced [2Fe-2S]-[ferredoxin]. The protein operates within protein modification; protein lipoylation via endogenous pathway; protein N(6)-(lipoyl)lysine from octanoyl-[acyl-carrier-protein]: step 2/2. Functionally, catalyzes the radical-mediated insertion of two sulfur atoms into the C-6 and C-8 positions of the octanoyl moiety bound to the lipoyl domains of lipoate-dependent enzymes, thereby converting the octanoylated domains into lipoylated derivatives. The sequence is that of Lipoyl synthase from Chromobacterium violaceum (strain ATCC 12472 / DSM 30191 / JCM 1249 / CCUG 213 / NBRC 12614 / NCIMB 9131 / NCTC 9757 / MK).